The chain runs to 413 residues: Histidine--tRNA ligase (413 aa).

Belongs to the class-II aminoacyl-tRNA synthetase family. In terms of assembly, homodimer.

It localises to the cytoplasm. The enzyme catalyses tRNA(His) + L-histidine + ATP = L-histidyl-tRNA(His) + AMP + diphosphate + H(+). The chain is Histidine--tRNA ligase from Ehrlichia canis (strain Jake).